The chain runs to 266 residues: 4-hydroxy-tetrahydrodipicolinate reductase (266 aa).

10-15 is an NAD(+) binding site; the sequence is GPRGRM. K38 is an NADP(+) binding site. NAD(+) contacts are provided by residues 99–101 and 125–128; these read GTT and APNF. H155 acts as the Proton donor/acceptor in catalysis. A (S)-2,3,4,5-tetrahydrodipicolinate-binding site is contributed by H156. The active-site Proton donor is the K159. 165–166 is a binding site for (S)-2,3,4,5-tetrahydrodipicolinate; sequence GT.

Belongs to the DapB family.

The protein localises to the cytoplasm. It catalyses the reaction (S)-2,3,4,5-tetrahydrodipicolinate + NAD(+) + H2O = (2S,4S)-4-hydroxy-2,3,4,5-tetrahydrodipicolinate + NADH + H(+). It carries out the reaction (S)-2,3,4,5-tetrahydrodipicolinate + NADP(+) + H2O = (2S,4S)-4-hydroxy-2,3,4,5-tetrahydrodipicolinate + NADPH + H(+). The protein operates within amino-acid biosynthesis; L-lysine biosynthesis via DAP pathway; (S)-tetrahydrodipicolinate from L-aspartate: step 4/4. In terms of biological role, catalyzes the conversion of 4-hydroxy-tetrahydrodipicolinate (HTPA) to tetrahydrodipicolinate. The protein is 4-hydroxy-tetrahydrodipicolinate reductase of Bacillus cereus (strain B4264).